Here is a 274-residue protein sequence, read N- to C-terminus: Kit ligand (274 aa).

An N-terminal signal peptide occupies residues 1–25 (MKKTQTWIITCIYLQLLLFNPLVHT). The residue at position 26 (Gln26) is a Pyrrolidone carboxylic acid. At 26 to 215 (QGICSNRVTD…SNSIEDSSLQ (190 aa)) the chain is on the extracellular side. Intrachain disulfides connect Cys29–Cys114 and Cys68–Cys164. 3 N-linked (GlcNAc...) asparagine glycosylation sites follow: Asn90, Asn145, and Asn196. The chain crosses the membrane as a helical span at residues 216–238 (WAAVALPAFFSLVIGFAFGAFYW). Residues 239–274 (KKKQPNLTRTVENRQINEEDNEISMLQEKEREFQEV) lie on the Cytoplasmic side of the membrane.

This sequence belongs to the SCF family. Homodimer, non-covalently linked. In terms of processing, a soluble form is produced by proteolytic processing of isoform 1 in the extracellular domain.

It is found in the cell membrane. Its subcellular location is the cytoplasm. It localises to the cytoskeleton. The protein resides in the cell projection. The protein localises to the lamellipodium. It is found in the filopodium. Its subcellular location is the secreted. Its function is as follows. Stimulates the proliferation of mast cells. Able to augment the proliferation of both myeloid and lymphoid hematopoietic progenitors in bone marrow culture. Also mediates cell-cell adhesion. Acts synergistically with other cytokines, probably interleukins. The sequence is that of Kit ligand (KITLG) from Bos taurus (Bovine).